A 203-amino-acid polypeptide reads, in one-letter code: Large ribosomal subunit protein eL15 (203 aa).

Residues 166 to 203 (ATGKKSRGINKGHRYNNTRSGRRHTWKRQNTQSYWRYR) form a disordered region. A compositionally biased stretch (basic residues) spans 169 to 192 (KKSRGINKGHRYNNTRSGRRHTWK). The segment covering 193 to 203 (RQNTQSYWRYR) has biased composition (polar residues).

The protein belongs to the eukaryotic ribosomal protein eL15 family.

This Aspergillus niger protein is Large ribosomal subunit protein eL15 (rpl15).